The primary structure comprises 178 residues: N-alpha-acetyltransferase 20 (178 aa).

Residues 2–157 (TTLRAFTCDD…DAYDMRKALS (156 aa)) enclose the N-acetyltransferase domain.

Belongs to the acetyltransferase family. ARD1 subfamily. As to quaternary structure, component of the N-terminal acetyltransferase B (NatB) complex which is composed of naa20 and naa25.

It localises to the cytoplasm. The protein localises to the nucleus. The catalysed reaction is N-terminal L-methionyl-L-asparaginyl-[protein] + acetyl-CoA = N-terminal N(alpha)-acetyl-L-methionyl-L-asparaginyl-[protein] + CoA + H(+). The enzyme catalyses N-terminal L-methionyl-L-glutaminyl-[protein] + acetyl-CoA = N-terminal N(alpha)-acetyl-L-methionyl-L-glutaminyl-[protein] + CoA + H(+). It carries out the reaction N-terminal L-methionyl-L-aspartyl-[protein] + acetyl-CoA = N-terminal N(alpha)-acetyl-L-methionyl-L-aspartyl-[protein] + CoA + H(+). It catalyses the reaction N-terminal L-methionyl-L-glutamyl-[protein] + acetyl-CoA = N-terminal N(alpha)-acetyl-L-methionyl-L-glutamyl-[protein] + CoA + H(+). In terms of biological role, catalytic subunit of the NatB complex which catalyzes acetylation of the N-terminal methionine residues of peptides beginning with Met-Asp, Met-Glu, Met-Asn and Met-Gln. Proteins with cell cycle functions are overrepresented in the pool of NatB substrates. Required for maintaining the structure and function of actomyosin fibers and for proper cellular migration. This Danio rerio (Zebrafish) protein is N-alpha-acetyltransferase 20 (naa20).